Here is a 346-residue protein sequence, read N- to C-terminus: Phosphoribosylformylglycinamidine cyclo-ligase (346 aa).

The protein belongs to the AIR synthase family.

It localises to the cytoplasm. It carries out the reaction 2-formamido-N(1)-(5-O-phospho-beta-D-ribosyl)acetamidine + ATP = 5-amino-1-(5-phospho-beta-D-ribosyl)imidazole + ADP + phosphate + H(+). Its pathway is purine metabolism; IMP biosynthesis via de novo pathway; 5-amino-1-(5-phospho-D-ribosyl)imidazole from N(2)-formyl-N(1)-(5-phospho-D-ribosyl)glycinamide: step 2/2. The protein is Phosphoribosylformylglycinamidine cyclo-ligase of Polaromonas sp. (strain JS666 / ATCC BAA-500).